The following is a 183-amino-acid chain: Protein P7 (183 aa).

It is found in the host nucleus. Its function is as follows. May play a role in inhibition of the host immune system by counteracting the type I interferon response. The sequence is that of Protein P7 from Gadus morhua (Atlantic cod).